Reading from the N-terminus, the 301-residue chain is Quinolinate synthase (301 aa).

2 residues coordinate iminosuccinate: histidine 21 and serine 38. Cysteine 83 contributes to the [4Fe-4S] cluster binding site. Residues 109 to 111 and serine 126 contribute to the iminosuccinate site; that span reads YIN. Residue cysteine 169 participates in [4Fe-4S] cluster binding. Iminosuccinate contacts are provided by residues 195–197 and threonine 212; that span reads HPE. Position 257 (cysteine 257) interacts with [4Fe-4S] cluster.

This sequence belongs to the quinolinate synthase family. Type 2 subfamily. The cofactor is [4Fe-4S] cluster.

It localises to the cytoplasm. It carries out the reaction iminosuccinate + dihydroxyacetone phosphate = quinolinate + phosphate + 2 H2O + H(+). It participates in cofactor biosynthesis; NAD(+) biosynthesis; quinolinate from iminoaspartate: step 1/1. In terms of biological role, catalyzes the condensation of iminoaspartate with dihydroxyacetone phosphate to form quinolinate. This Clostridium perfringens (strain 13 / Type A) protein is Quinolinate synthase.